Consider the following 601-residue polypeptide: Elongation factor 4 (601 aa).

The 183-residue stretch at 7–189 (KNIRNFSIVA…AIVTRLPPPM (183 aa)) folds into the tr-type G domain. GTP-binding positions include 19–24 (DHGKST) and 136–139 (NKVD).

Belongs to the TRAFAC class translation factor GTPase superfamily. Classic translation factor GTPase family. LepA subfamily.

It localises to the cell inner membrane. The catalysed reaction is GTP + H2O = GDP + phosphate + H(+). Its function is as follows. Required for accurate and efficient protein synthesis under certain stress conditions. May act as a fidelity factor of the translation reaction, by catalyzing a one-codon backward translocation of tRNAs on improperly translocated ribosomes. Back-translocation proceeds from a post-translocation (POST) complex to a pre-translocation (PRE) complex, thus giving elongation factor G a second chance to translocate the tRNAs correctly. Binds to ribosomes in a GTP-dependent manner. The polypeptide is Elongation factor 4 (Xanthobacter autotrophicus (strain ATCC BAA-1158 / Py2)).